A 673-amino-acid chain; its full sequence is Protein kinase ORF74 (673 aa).

In terms of domain architecture, Protein kinase spans 128-404 (TDTDEAVARG…ARELLVYPRY (277 aa)). The Proton acceptor role is filled by aspartate 252. Positions 340-364 (MDNDALDSRRTGRDGDPVNPEGFGT) are disordered. The segment covering 345-355 (LDSRRTGRDGD) has biased composition (basic and acidic residues).

This sequence belongs to the protein kinase superfamily. Ser/Thr protein kinase family.

The catalysed reaction is L-seryl-[protein] + ATP = O-phospho-L-seryl-[protein] + ADP + H(+). It catalyses the reaction L-threonyl-[protein] + ATP = O-phospho-L-threonyl-[protein] + ADP + H(+). This is Protein kinase ORF74 (ORF74) from Ictalurid herpesvirus 1 (strain Auburn) (IcHV-1).